Reading from the N-terminus, the 507-residue chain is Maturase K (507 aa).

This sequence belongs to the intron maturase 2 family. MatK subfamily.

The protein resides in the plastid. It is found in the chloroplast. In terms of biological role, usually encoded in the trnK tRNA gene intron. Probably assists in splicing its own and other chloroplast group II introns. The protein is Maturase K of Ranunculus repens (Creeping buttercup).